The following is a 353-amino-acid chain: Purine nucleoside phosphorylase (353 aa).

Residues 1 to 16 (MSKFSYLQNGKASTNG) are compositionally biased toward polar residues. A disordered region spans residues 1–42 (MSKFSYLQNGKASTNGVPHANGHHQQHQNGHSNGVARNGGTA). Residues S98, H129, 149-151 (RFH), and A181 each bind phosphate. Residue E266 coordinates a purine D-ribonucleoside. Phosphate is bound at residue S285. N308 contributes to the a purine D-ribonucleoside binding site.

It belongs to the PNP/MTAP phosphorylase family. Homotrimer.

The catalysed reaction is inosine + phosphate = alpha-D-ribose 1-phosphate + hypoxanthine. It carries out the reaction guanosine + phosphate = alpha-D-ribose 1-phosphate + guanine. The enzyme catalyses 2'-deoxyguanosine + phosphate = 2-deoxy-alpha-D-ribose 1-phosphate + guanine. It catalyses the reaction 2'-deoxyinosine + phosphate = 2-deoxy-alpha-D-ribose 1-phosphate + hypoxanthine. Its pathway is purine metabolism; purine nucleoside salvage. Inhibited by 5'-deaza-1'-aza-2c-deoxy-1'-(9-methylene) immucillin-H (DADMe-ImmH). Functionally, as part of the purine salvage pathway, catalyzes the phosphorolytic breakdown of the N-glycosidic bond in the beta-(deoxy)ribonucleoside molecules, with the formation of the corresponding free purine bases and pentose-1-phosphate. Preferentially acts on 2'-deoxyinosine and inosine, and to a lesser extent on 2'-deoxyguanosine and guanosine. Has no activity towards adenosine or 2'-deoxyadenosine. The chain is Purine nucleoside phosphorylase from Anopheles gambiae (African malaria mosquito).